Reading from the N-terminus, the 84-residue chain is Envelope glycoprotein N (84 aa).

An N-terminal signal peptide occupies residues 1–26 (MSCKKSARQSLYVSLCLFYILVFAAA). Residues 27-47 (TEVDFYSPECHSHTYEIVLNS) are Virion surface-facing. The helical transmembrane segment at 48–68 (FSSIWLLINLFLLLCSFAIFL) threads the bilayer. Residues 69–84 (KYWCYKTFASETVKGY) are Intravirion-facing.

This sequence belongs to the herpesviridae glycoprotein N family. As to quaternary structure, interacts (via N-terminus) with gM (via N-terminus). The gM-gN heterodimer forms the gCII complex.

It localises to the virion membrane. The protein localises to the host membrane. Its subcellular location is the host Golgi apparatus. It is found in the host trans-Golgi network. Envelope glycoprotein necessary for proper maturation of gM and modulation of its membrane fusion activity. Also plays a critical role in virion morphogenesis. In Homo sapiens (Human), this protein is Envelope glycoprotein N.